A 681-amino-acid polypeptide reads, in one-letter code: MEKQIQVTLPDGTVKTFPAGTTPFQVAESISPRLAQAAVVARIQTTQPAAATVTAGSEADSKTASEAAMYSAADPGAPRLVDLSTPLEEDVQLALLTEKDPEALKVLRHSAAHLMATAVLELFPETKLGHGPATDAGFFYDFYRPTPFTPEDLKLIEGRMAEIAQRNDKFVREFIPREEGLAEFKAGDDFMKVHFIERFTQPGEAISLYRNGNFVDFCRGPHVPSTNRIKAFKVTNLAGAYWLGDEKNPQLQRLYGTAFFSKKDLDEHFARLEEIAKRDHRVLGKQLDLFSIQEIAGAGLIFWHPKGAMIRKIMEDWMREECIRRGYDLVYTPHVMRVQLWKTSGHEGFYSQNMFTPMELDDAEYRLKPMNCPGHILIYKSQPRSYRDLPVRYAELGNVYRYERSGTMHGLLRVRGFTQDDAHIFCTPEQIEDEVVACIDFAQSVLTTFGFMDFQVELSTWDPNDRKNYAGSDDKWNLAISSLESALTRKGIAYKTIAGEAAFYGPKIDIKLVDVLGRLWQLSTVQFDFNLPARFELEYVGEDGERHQPVMVHRALYGSVERFFGVLIEHYAGAFPLWLAPVQIGLVPISERHLAYAEKVQQQLEAAGFRVELDRRNEKMNAKIRDFTLQKFPYVLIMGDKEAEAGAVSVRTRGKGDQGSLPLDEFIGRATTLIDTKSGDL.

The 95-residue stretch at 3–97 (KQIQVTLPDG…EEDVQLALLT (95 aa)) folds into the TGS domain. Residues 279–576 (DHRVLGKQLD…LIEHYAGAFP (298 aa)) are catalytic. Positions 372, 423, and 553 each coordinate Zn(2+).

This sequence belongs to the class-II aminoacyl-tRNA synthetase family. As to quaternary structure, homodimer. The cofactor is Zn(2+).

The protein resides in the cytoplasm. The enzyme catalyses tRNA(Thr) + L-threonine + ATP = L-threonyl-tRNA(Thr) + AMP + diphosphate + H(+). Functionally, catalyzes the attachment of threonine to tRNA(Thr) in a two-step reaction: L-threonine is first activated by ATP to form Thr-AMP and then transferred to the acceptor end of tRNA(Thr). Also edits incorrectly charged L-seryl-tRNA(Thr). The chain is Threonine--tRNA ligase from Acidobacterium capsulatum (strain ATCC 51196 / DSM 11244 / BCRC 80197 / JCM 7670 / NBRC 15755 / NCIMB 13165 / 161).